Consider the following 199-residue polypeptide: Protein GrpE (199 aa).

Over residues 1-17 (MSDSDNNTKSQQNNPTQ) the composition is skewed to polar residues. The segment at 1-36 (MSDSDNNTKSQQNNPTQTDEKSGEEIQSNQKPQRKF) is disordered.

It belongs to the GrpE family. As to quaternary structure, homodimer.

The protein localises to the cytoplasm. Its function is as follows. Participates actively in the response to hyperosmotic and heat shock by preventing the aggregation of stress-denatured proteins, in association with DnaK and GrpE. It is the nucleotide exchange factor for DnaK and may function as a thermosensor. Unfolded proteins bind initially to DnaJ; upon interaction with the DnaJ-bound protein, DnaK hydrolyzes its bound ATP, resulting in the formation of a stable complex. GrpE releases ADP from DnaK; ATP binding to DnaK triggers the release of the substrate protein, thus completing the reaction cycle. Several rounds of ATP-dependent interactions between DnaJ, DnaK and GrpE are required for fully efficient folding. The sequence is that of Protein GrpE from Ehrlichia canis (strain Jake).